A 172-amino-acid chain; its full sequence is Bifunctional protein PyrR (172 aa).

A PRPP-binding motif is present at residues 90 to 102; the sequence is LVLVDDVLMSGRT.

This sequence belongs to the purine/pyrimidine phosphoribosyltransferase family. PyrR subfamily.

The catalysed reaction is UMP + diphosphate = 5-phospho-alpha-D-ribose 1-diphosphate + uracil. Its function is as follows. Regulates the transcription of the pyrimidine nucleotide (pyr) operon in response to exogenous pyrimidines. Functionally, also displays a weak uracil phosphoribosyltransferase activity which is not physiologically significant. The sequence is that of Bifunctional protein PyrR from Pseudomonas putida (strain GB-1).